A 332-amino-acid chain; its full sequence is D-amino acid oxidase (332 aa).

Ala8, Gly9, Ile10, Thr39, Thr40, Ala45, Gly46, Leu47, Val161, and Ser180 together coordinate FAD. The D-proline site is built by Tyr218 and Arg274. D-serine is bound by residues Tyr218 and Arg274. Positions 274, 305, 306, 308, and 310 each coordinate FAD. D-proline is bound at residue Gly306. Gly306 is a D-serine binding site. The Microbody targeting signal motif lies at 330–332; that stretch reads AKL.

The protein belongs to the DAMOX/DASOX family. The cofactor is FAD.

It is found in the peroxisome matrix. The enzyme catalyses a D-alpha-amino acid + O2 + H2O = a 2-oxocarboxylate + H2O2 + NH4(+). It carries out the reaction D-alanine + O2 + H2O = pyruvate + H2O2 + NH4(+). The catalysed reaction is D-arginine + O2 + H2O = 5-guanidino-2-oxopentanoate + H2O2 + NH4(+). It catalyses the reaction D-asparagine + O2 + H2O = 2-oxosuccinamate + H2O2 + NH4(+). The enzyme catalyses D-cysteine + O2 + H2O = 2-oxo-3-sulfanylpropanoate + H2O2 + NH4(+). It carries out the reaction D-glutamine + O2 + H2O = 2-oxoglutaramate + H2O2 + NH4(+). The catalysed reaction is D-isoleucine + O2 + H2O = (R)-3-methyl-2-oxopentanoate + H2O2 + NH4(+). It catalyses the reaction D-leucine + O2 + H2O = 4-methyl-2-oxopentanoate + H2O2 + NH4(+). The enzyme catalyses D-lysine + O2 + H2O = 6-amino-2-oxohexanoate + H2O2 + NH4(+). It carries out the reaction D-methionine + O2 + H2O = 4-methylsulfanyl-2-oxobutanoate + H2O2 + NH4(+). The catalysed reaction is D-phenylalanine + O2 + H2O = 3-phenylpyruvate + H2O2 + NH4(+). It catalyses the reaction D-proline + O2 = 1-pyrroline-2-carboxylate + H2O2. The enzyme catalyses D-valine + O2 + H2O = 3-methyl-2-oxobutanoate + H2O2 + NH4(+). It carries out the reaction D-histidine + O2 + H2O = 3-(imidazol-5-yl)pyruvate + H2O2 + NH4(+). The catalysed reaction is D-tyrosine + O2 + H2O = 3-(4-hydroxyphenyl)pyruvate + H2O2 + NH4(+). It catalyses the reaction D-serine + O2 + H2O = 3-hydroxypyruvate + H2O2 + NH4(+). The enzyme catalyses D-threonine + O2 + H2O = (S)-3-hydroxy-2-oxobutanoate + H2O2 + NH4(+). It carries out the reaction D-tryptophan + O2 + H2O = indole-3-pyruvate + H2O2 + NH4(+). Catalyzes the oxidative deamination of D-amino acids with broad substrate specificity. Could be responsible for the degradation of diet-derived D-alanine in the intestine. Maintains the asexual state of worms and represses early ovarian development. Following sexual induction, the enzyme is required for differentiation of oogonia into oocytes in the developing ovaries. The chain is D-amino acid oxidase from Dugesia ryukyuensis (Freshwater planarian flatworm).